The chain runs to 425 residues: Histidine--tRNA ligase 2 (425 aa).

It belongs to the class-II aminoacyl-tRNA synthetase family. Homodimer.

The protein resides in the cytoplasm. It catalyses the reaction tRNA(His) + L-histidine + ATP = L-histidyl-tRNA(His) + AMP + diphosphate + H(+). In Shouchella clausii (strain KSM-K16) (Alkalihalobacillus clausii), this protein is Histidine--tRNA ligase 2.